The following is a 443-amino-acid chain: Signal recognition particle 54 kDa protein (443 aa).

Residues 104–111 (GLQGSGKT), 184–188 (DTAGR), and 242–245 (TKLD) each bind GTP.

It belongs to the GTP-binding SRP family. SRP54 subfamily. In terms of assembly, part of the signal recognition particle protein translocation system, which is composed of SRP and FtsY. Archaeal SRP consists of a 7S RNA molecule of 300 nucleotides and two protein subunits: SRP54 and SRP19.

The protein resides in the cytoplasm. It catalyses the reaction GTP + H2O = GDP + phosphate + H(+). Involved in targeting and insertion of nascent membrane proteins into the cytoplasmic membrane. Binds to the hydrophobic signal sequence of the ribosome-nascent chain (RNC) as it emerges from the ribosomes. The SRP-RNC complex is then targeted to the cytoplasmic membrane where it interacts with the SRP receptor FtsY. This is Signal recognition particle 54 kDa protein from Methanosarcina mazei (strain ATCC BAA-159 / DSM 3647 / Goe1 / Go1 / JCM 11833 / OCM 88) (Methanosarcina frisia).